The following is a 104-amino-acid chain: Putative ankyrin repeat protein L677 (104 aa).

3 ANK repeats span residues 16 to 43, 44 to 73, and 75 to 102; these read FNKS…NPNL, DISH…SNSV, and LEAY…NKSI.

In Acanthamoeba polyphaga (Amoeba), this protein is Putative ankyrin repeat protein L677.